We begin with the raw amino-acid sequence, 741 residues long: NAD(P)H-quinone oxidoreductase subunit 5, chloroplastic (741 aa).

14 consecutive transmembrane segments (helical) span residues 9-29, 40-60, 89-109, 122-139, 147-167, 185-205, 219-239, 258-278, 280-300, 396-416, 425-445, 544-564, 603-623, and 719-739; these read WIIP…LLLV, WAFP…DLSI, IDPL…MVLI, LRFF…LGLV, IHIF…FWFT, GDFG…SLEF, NGVN…GAVA, TPIS…FLVA, LLPI…LGII, TTFL…CFWS, WLYS…TAFY, LFPL…GIPF, IYSV…YGSV, and YLFV…FYFL.

This sequence belongs to the complex I subunit 5 family. As to quaternary structure, NDH is composed of at least 16 different subunits, 5 of which are encoded in the nucleus.

The protein localises to the plastid. The protein resides in the chloroplast thylakoid membrane. The enzyme catalyses a plastoquinone + NADH + (n+1) H(+)(in) = a plastoquinol + NAD(+) + n H(+)(out). It carries out the reaction a plastoquinone + NADPH + (n+1) H(+)(in) = a plastoquinol + NADP(+) + n H(+)(out). NDH shuttles electrons from NAD(P)H:plastoquinone, via FMN and iron-sulfur (Fe-S) centers, to quinones in the photosynthetic chain and possibly in a chloroplast respiratory chain. The immediate electron acceptor for the enzyme in this species is believed to be plastoquinone. Couples the redox reaction to proton translocation, and thus conserves the redox energy in a proton gradient. This Liriodendron tulipifera (Tuliptree) protein is NAD(P)H-quinone oxidoreductase subunit 5, chloroplastic (ndhF).